A 164-amino-acid chain; its full sequence is UPF0178 protein RPB_3201 (164 aa).

This sequence belongs to the UPF0178 family.

This chain is UPF0178 protein RPB_3201, found in Rhodopseudomonas palustris (strain HaA2).